The chain runs to 177 residues: Inorganic pyrophosphatase (177 aa).

Residues Lys-31, Arg-45, and Tyr-57 each contribute to the substrate site. Mg(2+) contacts are provided by Asp-67, Asp-72, and Asp-104. Tyr-141 is a substrate binding site.

The protein belongs to the PPase family. As to quaternary structure, homohexamer. Also forms homotrimers, but the trimeric form is 23% less active than the hexamer. In fact, likely forms a dimer of trimers. Mg(2+) is required as a cofactor.

The protein resides in the cytoplasm. The enzyme catalyses diphosphate + H2O = 2 phosphate + H(+). Inhibited by sodium fluoride (NaF) in vitro, similarly to other class A type inorganic pyrophosphatases. Functionally, catalyzes the hydrolysis of inorganic pyrophosphate (PPi) forming two phosphate ions. The hydrolysis of PPi by inorganic pyrophosphatase releases a considerable amount of energy that can drive unfavorable biochemical transformations to completion. Is not active on nucleoside triphosphates (ATP, TTP, GTP, or CTP) or nucleoside diphosphate (ADP). The polypeptide is Inorganic pyrophosphatase (Haloferax volcanii (strain ATCC 29605 / DSM 3757 / JCM 8879 / NBRC 14742 / NCIMB 2012 / VKM B-1768 / DS2) (Halobacterium volcanii)).